Consider the following 120-residue polypeptide: Cell division protein FtsL (120 aa).

The Cytoplasmic portion of the chain corresponds to 1 to 36; sequence MTNLAVKYKQQAQEEVQIQTPPQQMAKPKVKAKITR. Residues 37 to 57 traverse the membrane as a helical segment; it reads IEKLLYVAFIGFLLYACVAFI. The Extracellular segment spans residues 58 to 120; the sequence is GNKAGLYQVN…INANNVKGLK (63 aa).

Belongs to the FtsL family.

It is found in the cell membrane. Functionally, essential cell division protein. In Bacillus cereus (strain ATCC 14579 / DSM 31 / CCUG 7414 / JCM 2152 / NBRC 15305 / NCIMB 9373 / NCTC 2599 / NRRL B-3711), this protein is Cell division protein FtsL.